We begin with the raw amino-acid sequence, 801 residues long: Putative mRNA-capping enzyme P5 (801 aa).

The protein belongs to the phytoreovirus protein P5 family.

It localises to the virion. The protein localises to the host cytoplasm. It catalyses the reaction a 5'-end diphospho-ribonucleoside in mRNA + GTP + H(+) = a 5'-end (5'-triphosphoguanosine)-ribonucleoside in mRNA + diphosphate. It participates in mRNA processing; mRNA capping. Its function is as follows. Enzyme involved in mRNA capping (Potential). Binds to GTP and might have guanylyltransferase activity. Together with the RNA-directed RNA polymerase P1 and protein P7, forms an transcriptional complex positioned near the channels situated at each of the five-fold vertices of the core. The sequence is that of Putative mRNA-capping enzyme P5 from Alopecurus aequalis (Barnyard grass).